The chain runs to 1512 residues: Bifunctional glutamate/proline--tRNA ligase (1512 aa).

The tract at residues 164–759 (GTKWDVSGNR…SSVLYSRVAV (596 aa)) is glutamate--tRNA ligase. A 'HIGH' region motif is present at residues 204 to 214 (PEASGYLHIGH). Positions 294-315 (TPAEQMKAEREQRTESKHRKNS) are disordered. Positions 299-308 (MKAEREQRTE) are enriched in basic and acidic residues. N6-acetyllysine; alternate is present on K300. K300 bears the N6-malonyllysine; alternate mark. Residue T355 is modified to Phosphothreonine. Residue K417 is modified to N6-acetyllysine. The 'KMSKS' region signature appears at 432 to 436 (VLSKR). S434 is modified (phosphoserine). 4 positions are modified to N6-acetyllysine: K498, K535, K542, and K637. Basic and acidic residues predominate over residues 709-736 (EMPTSGSKEKTKVEISKKETSSAPKERP). A disordered region spans residues 709 to 742 (EMPTSGSKEKTKVEISKKETSSAPKERPAPAVSS). In terms of domain architecture, WHEP-TRS 1 spans 749-805 (DSSVLYSRVAVQGDVVRELKAKKAPKEDIDAAVKQLLTLKAEYKEKTGQEYKPGNPS). Residues 760 to 956 (QGDVVRELKA…GIEYKPVSAT (197 aa)) are 3 X 57 AA approximate repeats. N6-acetyllysine is present on K788. The disordered stretch occupies residues 795–819 (TGQEYKPGNPSAAAVQTVSTKSSSN). Residues 808-819 (AVQTVSTKSSSN) show a composition bias toward polar residues. The WHEP-TRS 2 domain maps to 822 to 878 (ESTSLYNKVAAQGEVVRKLKAEKAPKAKVTEAVECLLSLKAEYKEKTGKDYVPGQPP). K861 is subject to N6-acetyllysine. 2 disordered regions span residues 869–898 (GKDY…GAEK) and 956–1011 (TGAE…PKKQ). Y872 bears the Phosphotyrosine mark. A compositionally biased stretch (polar residues) spans 878 to 892 (PASQNSHSNPVSNAQ). S885 is subject to Phosphoserine. A WHEP-TRS 3 domain is found at 900–956 (EAKVLFDRVACQGEVVRKLKAEKASKDQVDSAVQELLQLKAQYKSLTGIEYKPVSAT). A compositionally biased stretch (basic and acidic residues) spans 958–976 (AEDKDKKKKEKENKSEKQN). A compositionally biased stretch (gly residues) spans 997–1006 (LSSGGAGEGQ). S998 carries the phosphoserine modification. Position 999 is a phosphoserine; by RPS6KB1 (S999). The tract at residues 1007–1512 (GPKKQTRLGL…KFYTLFGRSY (506 aa)) is proline--tRNA ligase. L-proline is bound by residues 1121-1123 (TSE) and R1152. Residues R1152, E1154, R1163, T1164, Q1237, and T1240 each coordinate ATP. Residue R1152 is modified to Omega-N-methylarginine. A Mg(2+)-binding site is contributed by Q1237. H1242 is a binding site for L-proline. Residues T1276 and R1278 each contribute to the ATP site. Position 1350 is a phosphoserine (S1350). Zn(2+)-binding residues include C1448, C1453, C1495, and C1497. K1503 carries the post-translational modification N6-acetyllysine.

This sequence in the N-terminal section; belongs to the class-I aminoacyl-tRNA synthetase family. Glutamate--tRNA ligase type 2 subfamily. It in the C-terminal section; belongs to the class-II aminoacyl-tRNA synthetase family. As to quaternary structure, homodimer. Part of the aminoacyl-tRNA synthetase multienzyme complex, also know as multisynthetase complex, that is composed of the tRNA ligases for Arg (RARS1), Asp (DARS1), Gln (QARS1), Ile (IARS1), Leu (LARS1), Lys (KARS1), Met (MARS1) the bifunctional ligase for Glu and Pro (EPRS1) and the auxiliary subunits AIMP1/p43, AIMP2/p38 and EEF1E1/p18. Forms a linear complex that contains MARS1, EEF1E1, EPRS1 and AIMP2 that is at the core of the multisubunit complex. Interacts with TARS3. Interacts with DUS2L. Component of the GAIT complex which is composed of EPRS1, RPL13A and GAPDH. Interacts (phosphorylated at Ser-999) with SLC27A1; mediates the translocation of SLC27A1 from the cytoplasm to the plasma membrane thereby increasing the uptake of long-chain fatty acids. Phosphorylated at Ser-999 by RPS6KB1; triggers EPRS1 release from the aminoacyl-tRNA synthetase multienzyme complex. In monocytes, the IFN-gamma-induced phosphorylation at Ser-999 releases EPRS1 from the aminoacyl-tRNA synthetase multienzyme complex, allowing its association with the GAIT complex. Phosphorylation at Ser-999 is specifically required for the RPL13A-mediated interaction of the GAIT complex with eIF4G. Phosphorylation at Ser-999 by RPS6KB1, is also induced by insulin through activation of the mTORC1 signaling pathway and promotes the interaction of EPRS1 with SLC27A1.

It localises to the cytoplasm. It is found in the cytosol. The protein resides in the membrane. The enzyme catalyses tRNA(Glu) + L-glutamate + ATP = L-glutamyl-tRNA(Glu) + AMP + diphosphate. The catalysed reaction is tRNA(Pro) + L-proline + ATP = L-prolyl-tRNA(Pro) + AMP + diphosphate. Functionally, multifunctional protein which primarily functions within the aminoacyl-tRNA synthetase multienzyme complex, also known as multisynthetase complex. Within the complex it catalyzes the attachment of both L-glutamate and L-proline to their cognate tRNAs in a two-step reaction where the amino acid is first activated by ATP to form a covalent intermediate with AMP. Subsequently, the activated amino acid is transferred to the acceptor end of the cognate tRNA to form L-glutamyl-tRNA(Glu) and L-prolyl-tRNA(Pro). Upon interferon-gamma stimulation, EPRS1 undergoes phosphorylation, causing its dissociation from the aminoacyl-tRNA synthetase multienzyme complex. It is recruited to form the GAIT complex, which binds to stem loop-containing GAIT elements found in the 3'-UTR of various inflammatory mRNAs, such as ceruloplasmin. The GAIT complex inhibits the translation of these mRNAs, allowing interferon-gamma to redirect the function of EPRS1 from protein synthesis to translation inhibition in specific cell contexts. Furthermore, it can function as a downstream effector in the mTORC1 signaling pathway, by promoting the translocation of SLC27A1 from the cytoplasm to the plasma membrane where it mediates the uptake of long-chain fatty acid by adipocytes. Thereby, EPRS1 also plays a role in fat metabolism and more indirectly influences lifespan. This is Bifunctional glutamate/proline--tRNA ligase from Mus musculus (Mouse).